The chain runs to 340 residues: Ribosomal RNA large subunit methyltransferase F (340 aa).

The segment at 1–36 is disordered; that stretch reads MNAPRTPKPARKKPDSATPAKPVEPRKEASLHPRNR.

This sequence belongs to the methyltransferase superfamily. METTL16/RlmF family.

The protein localises to the cytoplasm. It catalyses the reaction adenosine(1618) in 23S rRNA + S-adenosyl-L-methionine = N(6)-methyladenosine(1618) in 23S rRNA + S-adenosyl-L-homocysteine + H(+). Specifically methylates the adenine in position 1618 of 23S rRNA. This chain is Ribosomal RNA large subunit methyltransferase F, found in Pseudomonas fluorescens (strain Pf0-1).